The primary structure comprises 374 residues: Type IV secretion system protein PtlG (374 aa).

The helical transmembrane segment at 38–56 (WMFALVAVALSCLLATGIW) threads the bilayer. The disordered stretch occupies residues 86-117 (HPREPEPAPLPDMPAAPDPILPQPRPAPPVPP). Residues 92–117 (PAPLPDMPAAPDPILPQPRPAPPVPP) show a composition bias toward pro residues.

The protein belongs to the TrbI/VirB10 family.

It localises to the cell membrane. Component of the type IV secretion system ptl required for secretion of assembled pertussis toxin (PTX) through the outer membrane. The sequence is that of Type IV secretion system protein PtlG (ptlG) from Bordetella pertussis (strain Tohama I / ATCC BAA-589 / NCTC 13251).